Reading from the N-terminus, the 340-residue chain is Polyporopepsin (340 aa).

A Peptidase A1 domain is found at 14–330; sequence YVVNVGVGSP…DTTNKRLGLA (317 aa). Residue Asp32 is part of the active site. Asn192 is a glycosylation site (N-linked (GlcNAc...) asparagine). Residue Asp212 is part of the active site. An N-linked (GlcNAc...) asparagine glycan is attached at Asn238.

Belongs to the peptidase A1 family.

The catalysed reaction is Milk clotting activity, broad specificity, but fails to cleave 15-Leu-|-Tyr-16 or 16-Tyr-|-Leu-17 of insulin B chain.. The polypeptide is Polyporopepsin (Irpex lacteus (Milk-white toothed polypore)).